The sequence spans 361 residues: MIRIPVALPMDSYDICIDEGGLERLGEYLAELGKVNRALVVSNPVVLRHYGARVVRSLNAAGFETASVTVPAGERHKHLRSVERIYQAALEHRLERSSLIVALGGGVVGDMAGFAASTWLRGIRVAQVPTTLLAMVDAAIGGKTGVNHPLGKNLIGTFHQPCLVLIDPQVLGTLPPRETRAAMAEVIKYGVIWDGDLFKRLEQLPSLQRPDARTLTTLLVRSCQAKAEVVVRDEREGGLRAILNYGHTVGHALESATGYRRYLHGEGVALGMAAAGRVAVALDLWSPEELRRQEALIIKARLPVRWKSDIASEALLLRMQSDKKVEAGKVRFVLPEAIGRVHTGVEVPTEVLRRVLDTLRG.

Residues 106–110, 130–131, Lys-143, and Lys-152 contribute to the NAD(+) site; these read GVVGD and TT. Residues Glu-185, His-247, and His-264 each coordinate Zn(2+).

It belongs to the sugar phosphate cyclases superfamily. Dehydroquinate synthase family. Requires NAD(+) as cofactor. Co(2+) is required as a cofactor. It depends on Zn(2+) as a cofactor.

It is found in the cytoplasm. The enzyme catalyses 7-phospho-2-dehydro-3-deoxy-D-arabino-heptonate = 3-dehydroquinate + phosphate. Its pathway is metabolic intermediate biosynthesis; chorismate biosynthesis; chorismate from D-erythrose 4-phosphate and phosphoenolpyruvate: step 2/7. Functionally, catalyzes the conversion of 3-deoxy-D-arabino-heptulosonate 7-phosphate (DAHP) to dehydroquinate (DHQ). The sequence is that of 3-dehydroquinate synthase from Gloeobacter violaceus (strain ATCC 29082 / PCC 7421).